Here is a 1487-residue protein sequence, read N- to C-terminus: MKKNREAQLCLFSALLAFLPFASLLNGNSKYMVLVPSQLYTETPEKICLHLYHLNETVTVTASLISQRGTRKLFDELVVDKDLFHCLSFTIPRLPSSEEEESLDINIEGAKHKFSERRVVLVKNKESVVFVQTDKPVYKPGQSVKFRVVSMDKNLHPLNELFPLAYIEDPKMNRIMQWQDIKTENGLKQLSFSLSAEPIQGPYKIVILKQSGVKEEHSFTVMEFVLPRFGVDVKVPNAISVYDEIINVTACAIYTYGKPVPGHVKISLCHGNPSFSSETKSACKEEDSELDNNGCSTQEVNITEFQLKENYLKMHQAFHVNATVTEEGTGSEFSGSGRIEVERTRNKFLFLKADSHFRHGIPFFVKIRLVDIKGDPIPNEQVFIKAQEAGYTNATTTDQHGLAKFSIDTSSISGYSLNIKVYHKEESSCIHSSCTAERHAEEHHTAYAVYSLSKSYIYLDTEAGVLPCNQIHTVQAHFILKGQVLGVLPQIVFHYLVMAQGSILQTGNHTHQVEPGVSQVQGNFALEIPVEFSMVPVAKMLIYTILPDGEVIADSVTFQVEKCLRNKVHLSFSPSQSLPASQTHMRVTASPQSLCGLRAVDQSVLLLKPEAELSPSLIYDLPGMQDSNFIPSSYHPFEDEYDCLMYQPRDTEELTYSVPYGREKDVYRYVRDMGLTAFTNLKIKHPTYCYEMNMVVLSAPAVESELSPRGGEFEMMPLGVNKSPLPKEPPRKDPPPKDPVIETIRNYFPETWIWDLVTVNSSGVTEVEMTVPDTITEWKAGALCLSNDTGLGLSSVATLQAFQPFFVELTMPYSVIRGEAFMLKATVMNYLPTSLPMAVQLEASPDFTAVPVGNDQDSYCLGANGRHTSSWLVTPKSLGNVNFSVSVEAQQSPELCGSQVATVPETGRKDTVVKVLIVEPEGIKKEHTFSSLLCASDAELSETLSLLLPPTVVKDSARAHFSVMGDILSSAIKNTQNLIQMPYGCGEQNMVLFAPNIYVLKYLNETQQLTEKIKSKALGYLRAGYQRELNYKHKDGSYSAFGDHNGQGQGNTWLTAFVLKSFAQARAFIFIDESHITDAFTWLSKQQKDSGCFRSSGSLFNNAMKGGVDDEITLSAYITMALLESSLPDTDPVVSKALGCLEASWETIEQGRNGSFVYTKTLMAYAFALAGNQEKRNEILKSLDKEAIREDNSIHWERPQKPTKSEGYLYTPQASSAEVEMSAYVVLARLTAQPAPSPEDLALSMGTIKWLTKQQNSHGGFSSTQDTVVALDALSKYGAATFSKSQKTPLVTIQSSGSFSQKFQVDNSNRLLLQQVSLPDIPGNYTVSVSGEGCVYAQTTLRYNMPLEKQQPAFALKVQTVPLTCNNPKGQNSFQISLEISYTGSRPASNMVIADVKMLSGFIPLKPTVKKLERLEHVSRTEVTTNNVLLYLDQVTNQTLSFSFIIQQDIPVKNLQPAIVKVYDYYETDEVAFAEYSSPCSSDKQNV.

Residues 1–24 (MKKNREAQLCLFSALLAFLPFASL) form the signal peptide. A disulfide bridge connects residues cysteine 48 and cysteine 86. Residues asparagine 55 and asparagine 247 are each glycosylated (N-linked (GlcNAc...) asparagine). Intrachain disulfides connect cysteine 251–cysteine 283 and cysteine 269–cysteine 295. 4 N-linked (GlcNAc...) asparagine glycosylation sites follow: asparagine 301, asparagine 321, asparagine 393, and asparagine 508. Intrachain disulfides connect cysteine 468-cysteine 563, cysteine 595-cysteine 784, and cysteine 643-cysteine 689. A bait region region spans residues 686 to 745 (PTYCYEMNMVVLSAPAVESELSPRGGEFEMMPLGVNKSPLPKEPPRKDPPPKDPVIETIR). 3 N-linked (GlcNAc...) asparagine glycosylation sites follow: asparagine 760, asparagine 787, and asparagine 882. 4 cysteine pairs are disulfide-bonded: cysteine 860/cysteine 896, cysteine 934/cysteine 1334, cysteine 1092/cysteine 1140, and cysteine 1365/cysteine 1480. Residues 985 to 988 (CGEQ) constitute a cross-link (isoglutamyl cysteine thioester (Cys-Gln)). N-linked (GlcNAc...) asparagine glycosylation occurs at asparagine 1004. Asparagine 1153, asparagine 1324, and asparagine 1437 each carry an N-linked (GlcNAc...) asparagine glycan.

It belongs to the protease inhibitor I39 (alpha-2-macroglobulin) family. As to quaternary structure, monomer. Plasma.

It localises to the secreted. Functionally, a proteinase activates the inhibitor by specific proteolysis in the bait region, which, by an unknown mechanism leads to reaction at the cysteinyl-glutamyl internal thiol ester site and to a conformational change, whereby the proteinase is trapped and/or covalently bound to the inhibitor. While in the tetrameric proteinase inhibitors steric inhibition is sufficiently strong, monomeric forms need a covalent linkage between the activated glutamyl residue of the original thiol ester and a terminal amino group of a lysine or another nucleophilic group on the proteinase, for inhibition to be effective. This chain is Murinoglobulin-1, found in Rattus norvegicus (Rat).